Reading from the N-terminus, the 444-residue chain is C4-dicarboxylate transport protein (444 aa).

9 helical membrane passes run 21-41 (HLYV…HFYP), 57-77 (LVKM…IAGM), 92-112 (IYFL…ANVV), 161-181 (GDIL…ALVG), 201-221 (LVSI…AFTI), 234-254 (LLIG…LGAV), 320-340 (IYMT…LSLS), 345-365 (LLLV…AGFI), and 368-388 (AATL…ILGI).

It belongs to the dicarboxylate/amino acid:cation symporter (DAACS) (TC 2.A.23) family.

It is found in the cell inner membrane. Its function is as follows. Responsible for the transport of dicarboxylates such as succinate, fumarate, and malate from the periplasm across the membrane. The chain is C4-dicarboxylate transport protein from Brucella anthropi (strain ATCC 49188 / DSM 6882 / CCUG 24695 / JCM 21032 / LMG 3331 / NBRC 15819 / NCTC 12168 / Alc 37) (Ochrobactrum anthropi).